A 109-amino-acid chain; its full sequence is UPF0060 membrane protein RHA1_ro06609 (109 aa).

4 helical membrane-spanning segments follow: residues 7 to 27 (VALF…VWQG), 33 to 53 (GWIW…VATL), 62 to 82 (ILAA…MVAD), and 88 to 108 (RWDV…MYAP).

It belongs to the UPF0060 family.

Its subcellular location is the cell membrane. The sequence is that of UPF0060 membrane protein RHA1_ro06609 from Rhodococcus jostii (strain RHA1).